The following is a 140-amino-acid chain: ATP synthase epsilon chain (140 aa).

Belongs to the ATPase epsilon chain family. In terms of assembly, F-type ATPases have 2 components, CF(1) - the catalytic core - and CF(0) - the membrane proton channel. CF(1) has five subunits: alpha(3), beta(3), gamma(1), delta(1), epsilon(1). CF(0) has three main subunits: a, b and c.

The protein localises to the cell inner membrane. Produces ATP from ADP in the presence of a proton gradient across the membrane. This is ATP synthase epsilon chain from Yersinia pseudotuberculosis serotype O:1b (strain IP 31758).